A 98-amino-acid polypeptide reads, in one-letter code: Citrate lyase acyl carrier protein 1 (98 aa).

Serine 14 is modified (O-(phosphoribosyl dephospho-coenzyme A)serine).

The protein belongs to the CitD family. Oligomer with a subunit composition of (alpha,beta,gamma)6.

It localises to the cytoplasm. Its function is as follows. Covalent carrier of the coenzyme of citrate lyase. This Salmonella paratyphi A (strain ATCC 9150 / SARB42) protein is Citrate lyase acyl carrier protein 1.